A 361-amino-acid polypeptide reads, in one-letter code: S-adenosylmethionine:tRNA ribosyltransferase-isomerase (361 aa).

This sequence belongs to the QueA family. Monomer.

The protein resides in the cytoplasm. It catalyses the reaction 7-aminomethyl-7-carbaguanosine(34) in tRNA + S-adenosyl-L-methionine = epoxyqueuosine(34) in tRNA + adenine + L-methionine + 2 H(+). The protein operates within tRNA modification; tRNA-queuosine biosynthesis. Its function is as follows. Transfers and isomerizes the ribose moiety from AdoMet to the 7-aminomethyl group of 7-deazaguanine (preQ1-tRNA) to give epoxyqueuosine (oQ-tRNA). The protein is S-adenosylmethionine:tRNA ribosyltransferase-isomerase of Mesorhizobium japonicum (strain LMG 29417 / CECT 9101 / MAFF 303099) (Mesorhizobium loti (strain MAFF 303099)).